Here is a 1042-residue protein sequence, read N- to C-terminus: Putative type I restriction enzyme MjaIXP endonuclease subunit (1042 aa).

The region spanning 323-487 (GETPEDRRIG…FLVFGDYISA (165 aa)) is the Helicase ATP-binding domain. A DEAH box motif is present at residues 439–442 (DEAH). The Helicase C-terminal domain occupies 551–731 (LTEDYLSKVS…DIKVVIEEMK (181 aa)).

This sequence belongs to the HsdR family. As to quaternary structure, the type I restriction/modification system is composed of three polypeptides R, M and S.

It carries out the reaction Endonucleolytic cleavage of DNA to give random double-stranded fragments with terminal 5'-phosphates, ATP is simultaneously hydrolyzed.. In terms of biological role, the restriction (R) subunit of a type I restriction enzyme that recognizes 5'-CCAN(5)GTR-3' and cleaves a random distance away. The R subunit is required for both nuclease and ATPase activities, but not for modification. After locating a non-methylated recognition site, the enzyme complex serves as a molecular motor that translocates DNA in an ATP-dependent manner until a collision occurs that triggers cleavage. In Methanocaldococcus jannaschii (strain ATCC 43067 / DSM 2661 / JAL-1 / JCM 10045 / NBRC 100440) (Methanococcus jannaschii), this protein is Putative type I restriction enzyme MjaIXP endonuclease subunit.